The sequence spans 476 residues: Methylenetetrahydrofolate--tRNA-(uracil-5-)-methyltransferase TrmFO (476 aa).

Residue glycine 14–glycine 19 participates in FAD binding. The disordered stretch occupies residues leucine 428–serine 447. Residues alanine 436–serine 447 show a composition bias toward basic and acidic residues.

It belongs to the MnmG family. TrmFO subfamily. FAD serves as cofactor.

It is found in the cytoplasm. The enzyme catalyses uridine(54) in tRNA + (6R)-5,10-methylene-5,6,7,8-tetrahydrofolate + NADH + H(+) = 5-methyluridine(54) in tRNA + (6S)-5,6,7,8-tetrahydrofolate + NAD(+). The catalysed reaction is uridine(54) in tRNA + (6R)-5,10-methylene-5,6,7,8-tetrahydrofolate + NADPH + H(+) = 5-methyluridine(54) in tRNA + (6S)-5,6,7,8-tetrahydrofolate + NADP(+). Its function is as follows. Catalyzes the folate-dependent formation of 5-methyl-uridine at position 54 (M-5-U54) in all tRNAs. This chain is Methylenetetrahydrofolate--tRNA-(uracil-5-)-methyltransferase TrmFO, found in Rhodopseudomonas palustris (strain BisA53).